Consider the following 349-residue polypeptide: Probable ethanolamine kinase A (349 aa).

This sequence belongs to the choline/ethanolamine kinase family.

The protein localises to the cytoplasm. It carries out the reaction ethanolamine + ATP = phosphoethanolamine + ADP + H(+). The protein operates within phospholipid metabolism; phosphatidylethanolamine biosynthesis; phosphatidylethanolamine from ethanolamine: step 1/3. Highly specific for ethanolamine phosphorylation. May be a rate-controlling step in phosphatidylethanolamine biosynthesis. The protein is Probable ethanolamine kinase A (etnkA) of Dictyostelium discoideum (Social amoeba).